Reading from the N-terminus, the 84-residue chain is ATP synthase subunit c (84 aa).

The next 2 membrane-spanning stretches (helical) occupy residues 13–33 and 56–76; these read IAVG…WGLI and FIFA…GFWF.

This sequence belongs to the ATPase C chain family. In terms of assembly, F-type ATPases have 2 components, F(1) - the catalytic core - and F(0) - the membrane proton channel. F(1) has five subunits: alpha(3), beta(3), gamma(1), delta(1), epsilon(1). F(0) has three main subunits: a(1), b(2) and c(10-14). The alpha and beta chains form an alternating ring which encloses part of the gamma chain. F(1) is attached to F(0) by a central stalk formed by the gamma and epsilon chains, while a peripheral stalk is formed by the delta and b chains.

The protein localises to the cell inner membrane. Functionally, f(1)F(0) ATP synthase produces ATP from ADP in the presence of a proton or sodium gradient. F-type ATPases consist of two structural domains, F(1) containing the extramembraneous catalytic core and F(0) containing the membrane proton channel, linked together by a central stalk and a peripheral stalk. During catalysis, ATP synthesis in the catalytic domain of F(1) is coupled via a rotary mechanism of the central stalk subunits to proton translocation. In terms of biological role, key component of the F(0) channel; it plays a direct role in translocation across the membrane. A homomeric c-ring of between 10-14 subunits forms the central stalk rotor element with the F(1) delta and epsilon subunits. The chain is ATP synthase subunit c from Acidithiobacillus ferrooxidans (strain ATCC 23270 / DSM 14882 / CIP 104768 / NCIMB 8455) (Ferrobacillus ferrooxidans (strain ATCC 23270)).